The chain runs to 406 residues: Histidine--tRNA ligase (406 aa).

The protein belongs to the class-II aminoacyl-tRNA synthetase family. In terms of assembly, homodimer.

The protein localises to the cytoplasm. It carries out the reaction tRNA(His) + L-histidine + ATP = L-histidyl-tRNA(His) + AMP + diphosphate + H(+). The sequence is that of Histidine--tRNA ligase from Nitratiruptor sp. (strain SB155-2).